Reading from the N-terminus, the 368-residue chain is N-acetylneuraminate epimerase (368 aa).

A signal peptide spans 1–19 (MNKTIMALAIMMASFAANA). Kelch repeat units follow at residues 40-84 (TVYI…AFID), 86-137 (NLYV…FVHN), 139-173 (KAYVTGGVNQNIFNGYFEDLNEAGKDSTAIDKINA), 174-219 (HYFD…VNKG), 222-265 (TWLI…VAGG), 287-336 (ENYQ…PWNN), and 338-367 (LLIIGGETAGGKAVTDSVLISVKDNKVTVQ). Glu228 acts as the Proton acceptor in catalysis.

This sequence belongs to the NanM family. Homodimer.

The protein localises to the periplasm. The catalysed reaction is N-acetyl-alpha-neuraminate = N-acetyl-beta-neuraminate. In terms of biological role, converts alpha-N-acetylneuranimic acid (Neu5Ac) to the beta-anomer, accelerating the equilibrium between the alpha- and beta-anomers. Probably facilitates sialidase-negative bacteria to compete successfully for limited amounts of extracellular Neu5Ac, which is likely taken up in the beta-anomer. In addition, the rapid removal of sialic acid from solution might be advantageous to the bacterium to damp down host responses. The protein is N-acetylneuraminate epimerase of Shigella flexneri serotype 5b (strain 8401).